We begin with the raw amino-acid sequence, 386 residues long: EARP and GARP complex-interacting protein 1 (386 aa).

Met-1 carries the post-translational modification N-acetylmethionine. WD repeat units follow at residues 132 to 172, 182 to 222, 226 to 266, and 270 to 310; these read GAQG…SQAV, RGQL…QIYC, AHGQ…EPVK, and EHSH…SEPF. The interval 312 to 332 is disordered; the sequence is HLVDDDDVSDPEEHHTEKSKE. At Ser-320 the chain carries Phosphoserine. The segment covering 322 to 332 has biased composition (basic and acidic residues); it reads PEEHHTEKSKE. Residues 344–384 form a WD 5 repeat; the sequence is EHEDSVYAVDWASADPWLFASLSYDGRLVINRVPRALKYHI.

This sequence belongs to the WD repeat EIPR1 family. As to quaternary structure, interacts with two multisubunit tethering complexes: EARP composed of VPS50, VPS51, VPS52 and VPS53 subunits and GARP complex composed of VPS51, VPS52, VPS53 and VPS54 subunits. Interacts with SNAP29. In terms of tissue distribution, ubiquitous. Highly expressed in brain, adipose tissue, spleen and kidney (at protein level).

Its subcellular location is the golgi apparatus. The protein localises to the trans-Golgi network. Functionally, acts as a component of endosomal retrieval machinery that is involved in protein transport from early endosomes to either recycling endosomes or the trans-Golgi network. Mediates the recruitment of Golgi-associated retrograde protein (GARP) complex to the trans-Golgi network and controls early endosome-to-Golgi transport of internalized protein. Promotes the recycling of internalized transferrin receptor (TFRC) to the plasma membrane through interaction with endosome-associated recycling protein (EARP) complex. Controls proper insulin distribution and secretion, and retention of cargo in mature dense core vesicles. Required for the stability of the endosome-associated retrograde protein (EARP) complex subunits and for proper localization and association of EARP with membranes. This chain is EARP and GARP complex-interacting protein 1, found in Rattus norvegicus (Rat).